The following is a 443-amino-acid chain: Enolase (443 aa).

Q167 contacts (2R)-2-phosphoglycerate. E209 acts as the Proton donor in catalysis. The Mg(2+) site is built by D246, E291, and D318. Residues K343, R372, S373, and K394 each coordinate (2R)-2-phosphoglycerate. Catalysis depends on K343, which acts as the Proton acceptor.

It belongs to the enolase family. As to quaternary structure, component of the RNA degradosome, a multiprotein complex involved in RNA processing and mRNA degradation. Mg(2+) is required as a cofactor.

The protein resides in the cytoplasm. Its subcellular location is the secreted. It localises to the cell surface. It catalyses the reaction (2R)-2-phosphoglycerate = phosphoenolpyruvate + H2O. Its pathway is carbohydrate degradation; glycolysis; pyruvate from D-glyceraldehyde 3-phosphate: step 4/5. Functionally, catalyzes the reversible conversion of 2-phosphoglycerate (2-PG) into phosphoenolpyruvate (PEP). It is essential for the degradation of carbohydrates via glycolysis. This is Enolase from Wigglesworthia glossinidia brevipalpis.